A 314-amino-acid chain; its full sequence is Pantothenate kinase (314 aa).

93-100 (GSVAVGKS) lines the ATP pocket.

Belongs to the prokaryotic pantothenate kinase family.

Its subcellular location is the cytoplasm. The catalysed reaction is (R)-pantothenate + ATP = (R)-4'-phosphopantothenate + ADP + H(+). It participates in cofactor biosynthesis; coenzyme A biosynthesis; CoA from (R)-pantothenate: step 1/5. The protein is Pantothenate kinase of Shewanella denitrificans (strain OS217 / ATCC BAA-1090 / DSM 15013).